The chain runs to 129 residues: Copper chaperone GriE (129 aa).

A signal peptide (tat-type signal) is located at residues 1 to 37; it reads MPMNRREMVMATTGAALAAAAAVPLLSGGEGEGAAEA. The disordered stretch occupies residues 32–51; sequence EGAAEAAAAPAKATGRGREH. Positions 34 to 45 are enriched in low complexity; sequence AAEAAAAPAKAT.

This sequence belongs to the melC1 family. Post-translationally, predicted to be exported by the Tat system. The position of the signal peptide cleavage has not been experimentally proven.

In terms of biological role, involved in the transfer of Cu(2+) ions to the apo form of o-aminophenol oxidase GriF in the grixazone biosynthetic pathway. The protein is Copper chaperone GriE (griE) of Streptomyces griseus subsp. griseus (strain JCM 4626 / CBS 651.72 / NBRC 13350 / KCC S-0626 / ISP 5235).